The chain runs to 516 residues: Histone H4 transcription factor (516 aa).

3 consecutive C2H2-type zinc fingers follow at residues 15–39 (LQCE…VTQH), 127–151 (FLCL…VEAH), and 167–191 (VLCG…LRSH). The segment at 197–219 (VACPTCGGMFANNTKFLDHIRRQ) adopts a C2H2-type 4; degenerate zinc-finger fold. 5 consecutive C2H2-type zinc fingers follow at residues 227–249 (FQCS…MRNH), 253–276 (YKCP…RFRH), 282–304 (FKCD…LDTH), 310–335 (YSCD…RKVH), and 343–366 (YRCH…RKKH). The interval 371–516 (PSGHPRFRYK…AAEEPEVQMV (146 aa)) is interaction with NPAT. Positions 372–405 (SGHPRFRYKEHEDGYMRLQLVRYESVELTQQLLR) are required for activation of histone H4 transcription and contributes to DNA-binding. 2 disordered regions span residues 429–456 (TVPG…PASQ) and 486–516 (PGEP…VQMV). Residues 436–445 (PQEEAEEEGG) show a composition bias toward acidic residues.

Binds MBD2 and a histone deacetylase complex. Interacts with NPAT. In terms of processing, ubiquitinated. Ubiquitination may lead to proteasome-mediated degradation.

It localises to the nucleus. Transcriptional repressor that binds to the consensus sequence 5'-CGGACGTT-3' and to the RB1 promoter. Transcriptional activator that promotes histone H4 gene transcription at the G1/S phase transition in conjunction with NPAT. Also activates transcription of the ATM and PRKDC genes. Autoregulates its expression by associating with its own promoter. This Bos taurus (Bovine) protein is Histone H4 transcription factor (HINFP).